Consider the following 112-residue polypeptide: MKKIEAIIKPFKLDEVKEALQAAGVQGLSVTEVKGFGRQKGHTELYRGAAYVVDFLPKVKIEVVLADDMVEAAVEAIVSASRTDKIGDGKIFISPVEQAIRIRTGETGEDAV.

Position 51 is an O-UMP-tyrosine (Tyr-51).

It belongs to the P(II) protein family. As to quaternary structure, homotrimer.

Its function is as follows. P-II indirectly controls the transcription of the glutamine synthetase gene (glnA). P-II prevents NR-II-catalyzed conversion of NR-I to NR-I-phosphate, the transcriptional activator of glnA. When P-II is uridylylated to P-II-UMP, these events are reversed. When the ratio of Gln to 2-ketoglutarate decreases, P-II is uridylylated to P-II-UMP, which causes the deadenylation of glutamine synthetase, so activating the enzyme. The polypeptide is Nitrogen regulatory protein P-II (glnB) (Cereibacter sphaeroides (Rhodobacter sphaeroides)).